We begin with the raw amino-acid sequence, 1357 residues long: Kinectin (1357 aa).

Over 1 to 6 (MEFYES) the chain is Cytoplasmic. The helical; Signal-anchor for type II membrane protein transmembrane segment at 7–29 (AYFIVLIPSIVITVIFLFFWLFM) threads the bilayer. The Lumenal portion of the chain corresponds to 30–1357 (KETLYDEVLA…KEKEHYQVLE (1328 aa)). 2 disordered regions span residues 48–81 (IPTK…ESVP) and 103–218 (NVVE…KQKT). Ser-75 bears the Phosphoserine; by FAM20C mark. Ser-77 is subject to Phosphoserine. Positions 121–135 (QKPVLEEQVIKESDA) are enriched in basic and acidic residues. Thr-153 bears the Phosphothreonine mark. Ser-156 carries the phosphoserine modification. Residues 161–171 (SKKKPGQKKSK) are compositionally biased toward basic residues. 5 N-linked (GlcNAc...) asparagine glycosylation sites follow: Asn-172, Asn-435, Asn-772, Asn-904, and Asn-1055. Over residues 172–182 (NGSDDQDKKVE) the composition is skewed to basic and acidic residues. Residues 330–1356 (LIHQLQEKDK…TKEKEHYQVL (1027 aa)) are a coiled coil. The residue at position 1084 (Ser-1084) is a Phosphoserine. Asn-1088 and Asn-1263 each carry an N-linked (GlcNAc...) asparagine glycan. At Ser-1313 the chain carries Phosphoserine. Asn-1329 carries an N-linked (GlcNAc...) asparagine glycan.

This sequence belongs to the kinectin family. In terms of assembly, parallel homodimers formed between the membrane-bound and the cytosolic form, and also between 2 cytosolic forms. High levels in peripheral blood lymphocytes, testis and ovary, lower levels in spleen, thymus, prostate, small intestine and colon.

It is found in the endoplasmic reticulum membrane. In terms of biological role, receptor for kinesin thus involved in kinesin-driven vesicle motility. Accumulates in integrin-based adhesion complexes (IAC) upon integrin aggregation by fibronectin. The protein is Kinectin (KTN1) of Homo sapiens (Human).